A 102-amino-acid polypeptide reads, in one-letter code: Integration host factor subunit beta (102 aa).

This sequence belongs to the bacterial histone-like protein family. As to quaternary structure, heterodimer of an alpha and a beta chain.

Functionally, this protein is one of the two subunits of integration host factor, a specific DNA-binding protein that functions in genetic recombination as well as in transcriptional and translational control. The sequence is that of Integration host factor subunit beta from Rhizobium rhizogenes (strain K84 / ATCC BAA-868) (Agrobacterium radiobacter).